An 85-amino-acid polypeptide reads, in one-letter code: Large ribosomal subunit protein bL27 (85 aa).

The disordered stretch occupies residues 1-20 (MAHKKGASSSRNGRDSNAQR). The span at 7–19 (ASSSRNGRDSNAQ) shows a compositional bias: polar residues.

Belongs to the bacterial ribosomal protein bL27 family.

The sequence is that of Large ribosomal subunit protein bL27 from Kineococcus radiotolerans (strain ATCC BAA-149 / DSM 14245 / SRS30216).